The primary structure comprises 311 residues: MTTQPSHLSVLLQESIDGLAIKPDGVYLDATFGRGGHTKQILSQLSPNGRLIALDRDPSAIEAAKALADDARFSIHHCNFSEMEDVLTSLELHGKVDGILMDLGVSSPQLDEPERGFSFMREGPLDMRMNPTKGQSAAQWLAHAEEQDIAQVIKEFGEEKFGKRIAHGIVNARQEAPITTTAQLAEIIDLAVPVKDKFKHPATRSFQGIRIYINSELDEIRTGLKAALNSLNSGGRLSVISFHSLEDRLVKRFIREQSRGLQVPHGLPIMQAEIDSHKAMKAIGKAIKPSSDELSRNVRARSSVLRVAEKL.

S-adenosyl-L-methionine is bound by residues Gly-35 to His-37, Asp-55, Phe-80, Asp-102, and Gln-109.

It belongs to the methyltransferase superfamily. RsmH family.

It localises to the cytoplasm. The catalysed reaction is cytidine(1402) in 16S rRNA + S-adenosyl-L-methionine = N(4)-methylcytidine(1402) in 16S rRNA + S-adenosyl-L-homocysteine + H(+). Functionally, specifically methylates the N4 position of cytidine in position 1402 (C1402) of 16S rRNA. This chain is Ribosomal RNA small subunit methyltransferase H, found in Pseudoalteromonas atlantica (strain T6c / ATCC BAA-1087).